The primary structure comprises 254 residues: Ubiquinone biosynthesis O-methyltransferase (254 aa).

S-adenosyl-L-methionine contacts are provided by R47, G76, D97, and L141.

This sequence belongs to the methyltransferase superfamily. UbiG/COQ3 family.

It catalyses the reaction a 3-demethylubiquinol + S-adenosyl-L-methionine = a ubiquinol + S-adenosyl-L-homocysteine + H(+). The enzyme catalyses a 3-(all-trans-polyprenyl)benzene-1,2-diol + S-adenosyl-L-methionine = a 2-methoxy-6-(all-trans-polyprenyl)phenol + S-adenosyl-L-homocysteine + H(+). Its pathway is cofactor biosynthesis; ubiquinone biosynthesis. O-methyltransferase that catalyzes the 2 O-methylation steps in the ubiquinone biosynthetic pathway. This is Ubiquinone biosynthesis O-methyltransferase from Maricaulis maris (strain MCS10) (Caulobacter maris).